Reading from the N-terminus, the 237-residue chain is Phosphatidylserine decarboxylase proenzyme (237 aa).

The active-site Schiff-base intermediate with substrate; via pyruvic acid is Ser-206. Ser-206 bears the Pyruvic acid (Ser); by autocatalysis mark.

Belongs to the phosphatidylserine decarboxylase family. PSD-A subfamily. As to quaternary structure, heterodimer of a large membrane-associated beta subunit and a small pyruvoyl-containing alpha subunit. Pyruvate serves as cofactor. In terms of processing, is synthesized initially as an inactive proenzyme. Formation of the active enzyme involves a self-maturation process in which the active site pyruvoyl group is generated from an internal serine residue via an autocatalytic post-translational modification. Two non-identical subunits are generated from the proenzyme in this reaction, and the pyruvate is formed at the N-terminus of the alpha chain, which is derived from the carboxyl end of the proenzyme. The post-translation cleavage follows an unusual pathway, termed non-hydrolytic serinolysis, in which the side chain hydroxyl group of the serine supplies its oxygen atom to form the C-terminus of the beta chain, while the remainder of the serine residue undergoes an oxidative deamination to produce ammonia and the pyruvoyl prosthetic group on the alpha chain.

It is found in the cell membrane. It carries out the reaction a 1,2-diacyl-sn-glycero-3-phospho-L-serine + H(+) = a 1,2-diacyl-sn-glycero-3-phosphoethanolamine + CO2. Its pathway is phospholipid metabolism; phosphatidylethanolamine biosynthesis; phosphatidylethanolamine from CDP-diacylglycerol: step 2/2. In terms of biological role, catalyzes the formation of phosphatidylethanolamine (PtdEtn) from phosphatidylserine (PtdSer). The sequence is that of Phosphatidylserine decarboxylase proenzyme from Mycobacteroides abscessus (strain ATCC 19977 / DSM 44196 / CCUG 20993 / CIP 104536 / JCM 13569 / NCTC 13031 / TMC 1543 / L948) (Mycobacterium abscessus).